Here is an 802-residue protein sequence, read N- to C-terminus: MPRIMIKGGVWRNTEDEILKAAVMKYGKNQWSRIASLLHRKSAKQCKARWYEWLDPSIKKTEWSREEEEKLLHLAKLMPTQWRTIAPIIGRTAAQCLEHYEFLLDKAAQRDNEEETTDDPRKLKPGEIDPNPETKPARPDPIDMDEDELEMLSEARARLANTQGKKAKRKAREKQLEEARRLAALQKRRELRAAGIEIQKKRKKKRGVDYNAEIPFEKKPALGFYDTSEENYQTLDADFRKLRQQDLDGELRSEKEGRDRKKDKQHLKRKKESDLPSAILQTSGVSEFTKKRSKLVLPAPQISDAELQEVVKVGQASEIARQTAEESGITNSASSTLLSEYNVTNNSIALRTPRTPASQDRILQEAQNLMALTNVDTPLKGGLNTPLHESDFSGVTPQRQVVQTPNTVLSTPFRTPSHGSEGLTPRSGTTPKPVINSTPGRTPLRDKLNINPEDGMADYSDPSYVKQMERESREHLRLGLLGLPAPKNDFEIVLPENAEKELEEREIDDTYIEDAADVDARKQAIRDAERVKEMKRMHKAVQKDLPRPSEVNETILRPLNVEPPLTDLQKSEELIKKEMITMLHYDLLHHPYEPSGNKKGKTVGFGTNNAEHIAYLEHNPYEKFSKEELKKAQDVLVQEMEVVKQGMSHGELSSEAYNQVWEECYSQVLYLPGQSRYTRANLASKKDRIESLEKRLEINRGHMTTEAKRAAKMEKKMKILLGGYQSRAMGLMKQLNDLWDQIEQAYLELRTFEELKKHEDSAIPRRLECLKEDVQRQQEREKELQHRYADLLLEKETLKAKF.

HTH myb-type domains lie at 1-56 (MPRI…WLDP) and 57-108 (SIKK…DKAA). DNA-binding regions (H-T-H motif) lie at residues 31-54 (WSRI…YEWL) and 82-104 (WRTI…EFLL). The interval 108–143 (AQRDNEEETTDDPRKLKPGEIDPNPETKPARPDPID) is disordered. Residues 118–127 (DDPRKLKPGE) are compositionally biased toward basic and acidic residues. A Glycyl lysine isopeptide (Lys-Gly) (interchain with G-Cter in SUMO2) cross-link involves residue lysine 135. The stretch at 142–245 (IDMDEDELEM…DADFRKLRQQ (104 aa)) forms a coiled coil. Positions 165-271 (KKAKRKAREK…KDKQHLKRKK (107 aa)) match the Nuclear localization signal motif. The segment at 200–206 (KKRKKKR) is required for interaction with CTNNBL1. A Glycyl lysine isopeptide (Lys-Gly) (interchain with G-Cter in SUMO2) cross-link involves residue lysine 219. Threonine 227 carries the phosphothreonine modification. A compositionally biased stretch (basic and acidic residues) spans 246–262 (DLDGELRSEKEGRDRKK). Positions 246–278 (DLDGELRSEKEGRDRKKDKQHLKRKKESDLPSA) are disordered. Positions 260–606 (RKKDKQHLKR…NKKGKTVGFG (347 aa)) are interaction with PPP1R8. A phosphoserine mark is found at serine 303 and serine 358. Threonine 377, threonine 385, threonine 396, threonine 404, threonine 411, and threonine 415 each carry phosphothreonine. Residues 409 to 418 (LSTPFRTPSH) show a composition bias toward polar residues. The interval 409–459 (LSTPFRTPSHGSEGLTPRSGTTPKPVINSTPGRTPLRDKLNINPEDGMADY) is disordered. Phosphoserine is present on serine 417. 2 positions are modified to phosphothreonine: threonine 424 and threonine 430. The segment covering 426-440 (RSGTTPKPVINSTPG) has biased composition (polar residues). Serine 437 carries the post-translational modification Phosphoserine. Phosphothreonine is present on residues threonine 438 and threonine 442. Residue lysine 487 forms a Glycyl lysine isopeptide (Lys-Gly) (interchain with G-Cter in SUMO2) linkage. The interaction with DAPK3 stretch occupies residues 501-659 (ELEEREIDDT…GELSSEAYNQ (159 aa)). 2 coiled-coil regions span residues 676 to 701 (RYTR…INRG) and 764 to 802 (PRRL…KAKF). Residues 706–800 (EAKRAAKMEK…LLLEKETLKA (95 aa)) form an interaction with PLRG1 region.

Belongs to the CEF1 family. Homodimer. Interacts with DAPK3. Component of the precatalytic, catalytic and postcatalytic spliceosome complexes. Part of a spliceosomal 'core' complex consisting of CDC5L, PLRG1, SPF27, CCAP1, CCAP3 and CCAP6. Interacts with PLRG1, Lodestar/TTF2, and NIPP1/PPP1R8. Component of the minor spliceosome, which splices U12-type introns. Within this complex, interacts with SCNM1. Component of the PRP19-CDC5L splicing complex composed of a core complex comprising a homotetramer of PRPF19, CDC5L, PLRG1 and BCAS2, and at least three less stably associated proteins CTNNBL1, CWC15 and HSPA8. Interacts (via its C-terminus) directly in the complex with PRPF19 and BCAS2. Interacts (via its C-terminus) directly with PRGL1 (via its WD40 repeat domain); the interaction is required for mRNA splicing but not for spliceosome assembly. Also interacts with CTNNBL1. Interacts with PRPF19 (via N-terminus). Interacts with USB1. Interacts with DDX41. Post-translationally, phosphorylated on serine and threonine residues. Phosphorylation on Thr-411 and Thr-438 is required for CDC5L-mediated mRNA splicing. Has no effect on subcellular location nor on homodimerization. Phosphorylated in vitro by CDK2. Phosphorylation enhances interaction with PPP1R8.

Its subcellular location is the nucleus. It localises to the nucleus speckle. The protein resides in the cytoplasm. Functionally, DNA-binding protein involved in cell cycle control. May act as a transcription activator. Plays a role in pre-mRNA splicing as core component of precatalytic, catalytic and postcatalytic spliceosomal complexes. Component of the PRP19-CDC5L complex that forms an integral part of the spliceosome and is required for activating pre-mRNA splicing. The PRP19-CDC5L complex may also play a role in the response to DNA damage (DDR). As a component of the minor spliceosome, involved in the splicing of U12-type introns in pre-mRNAs. This Bos taurus (Bovine) protein is Cell division cycle 5-like protein (CDC5L).